Reading from the N-terminus, the 395-residue chain is F-box/kelch-repeat protein At3g13680 (395 aa).

In terms of domain architecture, F-box spans 1 to 47 (MTTMGDLPGDLVEEILSRVPLTSLRAIRSTCQKWNSLSKSQICGRKA). Kelch repeat units follow at residues 154–202 (ILRI…SLKG), 210–256 (KKET…VSLA), 265–314 (VLYQ…FIDE), and 337–383 (IVYI…LVQL).

The polypeptide is F-box/kelch-repeat protein At3g13680 (Arabidopsis thaliana (Mouse-ear cress)).